The sequence spans 109 residues: Small ribosomal subunit protein uS17A (109 aa).

The protein belongs to the universal ribosomal protein uS17 family. In terms of assembly, part of the 30S ribosomal subunit.

In terms of biological role, one of the primary rRNA binding proteins, it binds specifically to the 5'-end of 16S ribosomal RNA. The chain is Small ribosomal subunit protein uS17A from Methanosarcina acetivorans (strain ATCC 35395 / DSM 2834 / JCM 12185 / C2A).